The sequence spans 394 residues: Elongation factor Tu 1 (394 aa).

A tr-type G domain is found at 10-204; it reads KPHVNVGTIG…ALDNYIPEPE (195 aa). Residues 19 to 26 form a G1 region; it reads GHVDHGKT. 19-26 contacts GTP; it reads GHVDHGKT. T26 lines the Mg(2+) pocket. The G2 stretch occupies residues 60 to 64; the sequence is GITIS. Residues 81-84 are G3; the sequence is DCPG. Residues 81–85 and 136–139 each bind GTP; these read DCPGH and NKCD. The interval 136 to 139 is G4; it reads NKCD. Residues 174 to 176 form a G5 region; sequence SAL.

This sequence belongs to the TRAFAC class translation factor GTPase superfamily. Classic translation factor GTPase family. EF-Tu/EF-1A subfamily. In terms of assembly, monomer.

It is found in the cytoplasm. The catalysed reaction is GTP + H2O = GDP + phosphate + H(+). Functionally, GTP hydrolase that promotes the GTP-dependent binding of aminoacyl-tRNA to the A-site of ribosomes during protein biosynthesis. The chain is Elongation factor Tu 1 from Photobacterium profundum (strain SS9).